A 708-amino-acid chain; its full sequence is O-antigen chain terminator bifunctional methyltransferase/kinase WbdD (708 aa).

The methyltransferase stretch occupies residues 1-210 (MTKDLNTLVS…VPRPMYLVSN (210 aa)). S-adenosyl-L-methionine contacts are provided by residues 16–17 (YQ), Arg-36, Gly-61, 82–87 (DFQQEN), 108–111 (GRIE), and Leu-128. A kinase region spans residues 211-459 (HRVLINDFNQ…AKLPSAEQQR (249 aa)). Residues Pro-229, His-237, 241–243 (RRY), Lys-252, Glu-274, 309–311 (EKL), Met-358, and Asp-369 each bind ATP. Residues 485 to 594 (AGSEALRGQI…EIEKIHRSRS (110 aa)) adopt a coiled-coil conformation. Residues 601–669 (YRYLGLQIHL…RLYRRMNPLP (69 aa)) are required for membrane-binding. A required for localizing WbdA to the membrane region spans residues 687–708 (VMHPELLPPEVYEIYLKLTKNK).

This sequence belongs to the WbdD family. As to quaternary structure, homotrimer in solution. Interacts with WbdA.

It localises to the cell inner membrane. It carries out the reaction 3-O-phospho-alpha-D-Man-(1-&gt;2)-alpha-D-Man-(1-&gt;2)-[alpha-D-Man-(1-&gt;3)-alpha-D-Man-(1-&gt;3)-alpha-D-Man-(1-&gt;2)-alpha-D-Man-(1-&gt;2)](n)-alpha-D-Man-(1-&gt;3)-alpha-D-Man-(1-&gt;3)-alpha-D-Man-(1-&gt;3)-alpha-D-GlcNAc-di-trans,octa-cis-undecaprenyl diphosphate + S-adenosyl-L-methionine = 3-O-methylphospho-alpha-D-Man-(1-&gt;2)-alpha-D-Man-(1-&gt;2)-[alpha-D-Man-(1-&gt;3)-alpha-D-Man-(1-&gt;3)-alpha-D-Man-(1-&gt;2)-alpha-D-Man-(1-&gt;2)](n)-alpha-D-Man-(1-&gt;3)-alpha-D-Man-(1-&gt;3)-alpha-D-Man-(1-&gt;3)-alpha-D-GlcNAc-di-trans,octa-cis-undecaprenyl diphosphate + S-adenosyl-L-homocysteine. It catalyses the reaction alpha-D-Man-(1-&gt;2)-alpha-D-Man-(1-&gt;2)-[alpha-D-Man-(1-&gt;3)-alpha-D-Man-(1-&gt;3)-alpha-D-Man-(1-&gt;2)-alpha-D-Man-(1-&gt;2)](n)-alpha-D-Man-(1-&gt;3)-alpha-D-Man-(1-&gt;3)-alpha-D-Man-(1-&gt;3)-alpha-D-GlcNAc-di-trans,octa-cis-undecaprenyl diphosphate + ATP = 3-O-phospho-alpha-D-Man-(1-&gt;2)-alpha-D-Man-(1-&gt;2)-[alpha-D-Man-(1-&gt;3)-alpha-D-Man-(1-&gt;3)-alpha-D-Man-(1-&gt;2)-alpha-D-Man-(1-&gt;2)](n)-alpha-D-Man-(1-&gt;3)-alpha-D-Man-(1-&gt;3)-alpha-D-Man-(1-&gt;3)-alpha-D-GlcNAc-di-trans,octa-cis-undecaprenyl diphosphate + ADP + H(+). It participates in bacterial outer membrane biogenesis; LPS O-antigen biosynthesis. Regulates the length of the LPS O-antigen polysaccharide chain. Stops the polymerization of the chain by phosphorylating and then methylating the phosphate on the terminal sugar. This terminal modification is essential for export of the O-antigen across the inner membrane. WbdD is also required for correct localization of the WbdA mannosyltransferase. This chain is O-antigen chain terminator bifunctional methyltransferase/kinase WbdD, found in Escherichia coli.